The chain runs to 88 residues: Small ribosomal subunit protein uS17 (88 aa).

This sequence belongs to the universal ribosomal protein uS17 family. As to quaternary structure, part of the 30S ribosomal subunit.

In terms of biological role, one of the primary rRNA binding proteins, it binds specifically to the 5'-end of 16S ribosomal RNA. In Xylella fastidiosa (strain M23), this protein is Small ribosomal subunit protein uS17.